The following is a 26-amino-acid chain: Fumarylacetoacetate hydrolase domain-containing protein 2A (26 aa).

This sequence belongs to the FAH family. Requires Ca(2+) as cofactor. It depends on Mg(2+) as a cofactor.

Its function is as follows. May have hydrolase activity. This chain is Fumarylacetoacetate hydrolase domain-containing protein 2A, found in Mesocricetus auratus (Golden hamster).